Here is a 404-residue protein sequence, read N- to C-terminus: Subtilisin-like protease 3 (404 aa).

An N-terminal signal peptide occupies residues M1–S20. Positions A21–Y114 are excised as a propeptide. In terms of domain architecture, Inhibitor I9 spans S38–S112. The Peptidase S8 domain occupies P123–Y404. A glycan (N-linked (GlcNAc...) asparagine) is linked at N133. Active-site charge relay system residues include D158 and H190. N-linked (GlcNAc...) asparagine glycosylation is found at N243, N251, N286, N307, and N340. The Charge relay system role is filled by S347. N366 carries an N-linked (GlcNAc...) asparagine glycan.

It belongs to the peptidase S8 family.

The protein resides in the secreted. Its function is as follows. Secreted subtilisin-like serine endopeptidase. Mediates the degradation of collagen, the major structural protein in the mammalian host. Degrades the nonhelical regions of collagen that function in the cross-linking of the helical components. May function as virulence factor involved in epidermal wing necrosis observed in white nose syndrome (WNS) in bats. This Pseudogymnoascus destructans (strain ATCC MYA-4855 / 20631-21) (Bat white-nose syndrome fungus) protein is Subtilisin-like protease 3.